Here is a 273-residue protein sequence, read N- to C-terminus: Ribosomal RNA small subunit methyltransferase A (273 aa).

Asparagine 18, leucine 20, glycine 45, glutamate 66, aspartate 91, and asparagine 113 together coordinate S-adenosyl-L-methionine.

It belongs to the class I-like SAM-binding methyltransferase superfamily. rRNA adenine N(6)-methyltransferase family. RsmA subfamily.

It is found in the cytoplasm. The catalysed reaction is adenosine(1518)/adenosine(1519) in 16S rRNA + 4 S-adenosyl-L-methionine = N(6)-dimethyladenosine(1518)/N(6)-dimethyladenosine(1519) in 16S rRNA + 4 S-adenosyl-L-homocysteine + 4 H(+). Functionally, specifically dimethylates two adjacent adenosines (A1518 and A1519) in the loop of a conserved hairpin near the 3'-end of 16S rRNA in the 30S particle. May play a critical role in biogenesis of 30S subunits. The sequence is that of Ribosomal RNA small subunit methyltransferase A from Escherichia coli O17:K52:H18 (strain UMN026 / ExPEC).